Here is a 353-residue protein sequence, read N- to C-terminus: Holliday junction branch migration complex subunit RuvB (353 aa).

Positions 1 to 183 (MNEPRIVAPQ…FGATYRLDFY (183 aa)) are large ATPase domain (RuvB-L). ATP is bound by residues Leu-22, Arg-23, Gly-64, Lys-67, Thr-68, Thr-69, 130 to 132 (EDF), Arg-173, Tyr-183, and Arg-220. Thr-68 is a binding site for Mg(2+). The tract at residues 184 to 254 (DTAALRAIVE…LARLALDQLA (71 aa)) is small ATPAse domain (RuvB-S). Positions 257–353 (ELGLDEVDRL…HAASERSSDA (97 aa)) are head domain (RuvB-H). DNA is bound by residues Arg-312 and Arg-317.

This sequence belongs to the RuvB family. Homohexamer. Forms an RuvA(8)-RuvB(12)-Holliday junction (HJ) complex. HJ DNA is sandwiched between 2 RuvA tetramers; dsDNA enters through RuvA and exits via RuvB. An RuvB hexamer assembles on each DNA strand where it exits the tetramer. Each RuvB hexamer is contacted by two RuvA subunits (via domain III) on 2 adjacent RuvB subunits; this complex drives branch migration. In the full resolvosome a probable DNA-RuvA(4)-RuvB(12)-RuvC(2) complex forms which resolves the HJ.

The protein resides in the cytoplasm. It catalyses the reaction ATP + H2O = ADP + phosphate + H(+). Its function is as follows. The RuvA-RuvB-RuvC complex processes Holliday junction (HJ) DNA during genetic recombination and DNA repair, while the RuvA-RuvB complex plays an important role in the rescue of blocked DNA replication forks via replication fork reversal (RFR). RuvA specifically binds to HJ cruciform DNA, conferring on it an open structure. The RuvB hexamer acts as an ATP-dependent pump, pulling dsDNA into and through the RuvAB complex. RuvB forms 2 homohexamers on either side of HJ DNA bound by 1 or 2 RuvA tetramers; 4 subunits per hexamer contact DNA at a time. Coordinated motions by a converter formed by DNA-disengaged RuvB subunits stimulates ATP hydrolysis and nucleotide exchange. Immobilization of the converter enables RuvB to convert the ATP-contained energy into a lever motion, pulling 2 nucleotides of DNA out of the RuvA tetramer per ATP hydrolyzed, thus driving DNA branch migration. The RuvB motors rotate together with the DNA substrate, which together with the progressing nucleotide cycle form the mechanistic basis for DNA recombination by continuous HJ branch migration. Branch migration allows RuvC to scan DNA until it finds its consensus sequence, where it cleaves and resolves cruciform DNA. This is Holliday junction branch migration complex subunit RuvB from Thermomicrobium roseum (strain ATCC 27502 / DSM 5159 / P-2).